A 758-amino-acid polypeptide reads, in one-letter code: MSDKDRITQLLRKLEEAKAREEEAKAREAQERCEKERLQLEHRKTTFLEYLRNCHRHLYNALRLTDTSRSSTGYTKVVGKYYPKRLRPWTNFTNVLHPRYFDLVQKICGQRQLFEPASTTKNLGTIISDHLAGNEKAIDRFEVDAVERPVQGILKVLATHEEAGKAYRCPEFRFSANLRELTQEDDRSSGADDNTSDGSLERRQQAGPNKRPTSKRKYICSNRQPDGVGIRMQPGGGQTQAFIYDYKAAHKVAIEHVRSATAKEHLFHEVVARINDDKLSRDEEVQRREQAEAFIAMALTQVFDYMITYGVSYGYVAAGRCLLLLYVDRDDWQTLYCHPCLPADDVGEPTNDWTDRLSHTAVAQLVSFCLSSFQSEALEGQSLETALSVAKATLKTWSESYADVAYLGLEPPELSSAASSQNTENSEYTSEAKPTGRKVALRSQSSCKPAAVLPQGNEHDEHDEDHSEPGASRSRLAANKRKRGPSSGGEDEDIAMADPEPTRQYCTQACLLGLKRGKDLDENCPNVSLHRFDGSSRHPVNAHRFTDMVKQQLLLSPYKGCRMVDFWDKRGAMGWLFKLELFPYGYTFVGKGTLEDRLSRLEHEGRVYARLDHLQGDVVPVHLGLVRLDRGYILPGLEFVVYMMLMSWAGQTPSASMADAETLKRESLTAIWSEGVDHGDDNRANYLWNAERCRIMIIDFDRAHLFPPLKARAVSRLSKPKRKRETPNSYLTEITGREARYVFKQMDRSPRATPSHGG.

Positions 4–41 (KDRITQLLRKLEEAKAREEEAKAREAQERCEKERLQLE) form a coiled coil. 2 disordered regions span residues 180–230 (ELTQ…GVGI) and 414–499 (LSSA…MADP). The segment covering 181–190 (LTQEDDRSSG) has biased composition (basic and acidic residues). Residues 416-429 (SAASSQNTENSEYT) are compositionally biased toward polar residues. Positions 457-468 (NEHDEHDEDHSE) are enriched in basic and acidic residues.

Its subcellular location is the cytoplasm. It is found in the nucleus. Its function is as follows. Promotes unequal transmission of alleles from the parental zygote to progeny spores by acting as poison/antidote system, leading to poisoning of progeny that do not inherit the allele. May possess DNA nuclease activity that leads to spore killing, and a kinase activity that confers resistance to the nuclease activity. Can suppress meiotic drive by the P.comata SPOK1 protein. This Podospora anserina (Pleurage anserina) protein is Meiotic driver SPOK4.